The primary structure comprises 140 residues: MFFTISRKNMSQKLSLLLLVFGLIWGLMLLHYTFQQPRHQSSVKLREQILDLSKRYVKALAEENKNTVDVENGASMAGYADLKRTIAVLLDDILQRLVKLENKVDYIVVNGSAANTTNGTSGNLVPVTTNKRTNVSGSIR.

An N-terminal signal peptide occupies residues 1 to 26 (MFFTISRKNMSQKLSLLLLVFGLIWG). N-linked (GlcNAc...) asparagine glycosylation is found at Asn110 and Asn134. Positions 120 to 140 (TSGNLVPVTTNKRTNVSGSIR) are disordered.

It is found in the secreted. The protein is Coiled-coil domain-containing protein 126 (CCDC126) of Homo sapiens (Human).